The primary structure comprises 660 residues: Bifunctional polymyxin resistance protein ArnA (660 aa).

A formyltransferase ArnAFT region spans residues Met-1–Leu-304. Position 86–88 (His-86–Ile-88) interacts with (6R)-10-formyltetrahydrofolate. His-104 functions as the Proton donor; for formyltransferase activity in the catalytic mechanism. (6R)-10-formyltetrahydrofolate is bound by residues Arg-114 and Val-136–Asp-140. Positions Arg-314–Ser-660 are dehydrogenase ArnADH. NAD(+)-binding positions include Asp-347 and Asp-368 to Ile-369. UDP-alpha-D-glucuronate is bound by residues Ala-393, Tyr-398, and Thr-432–Ser-433. Glu-434 serves as the catalytic Proton acceptor; for decarboxylase activity. UDP-alpha-D-glucuronate contacts are provided by residues Arg-460, Asn-492, Lys-526–Arg-535, and Tyr-613. The Proton donor; for decarboxylase activity role is filled by Arg-619.

The protein in the N-terminal section; belongs to the Fmt family. UDP-L-Ara4N formyltransferase subfamily. In the C-terminal section; belongs to the NAD(P)-dependent epimerase/dehydratase family. UDP-glucuronic acid decarboxylase subfamily. Homohexamer, formed by a dimer of trimers.

It carries out the reaction UDP-alpha-D-glucuronate + NAD(+) = UDP-beta-L-threo-pentopyranos-4-ulose + CO2 + NADH. It catalyses the reaction UDP-4-amino-4-deoxy-beta-L-arabinose + (6R)-10-formyltetrahydrofolate = UDP-4-deoxy-4-formamido-beta-L-arabinose + (6S)-5,6,7,8-tetrahydrofolate + H(+). The protein operates within nucleotide-sugar biosynthesis; UDP-4-deoxy-4-formamido-beta-L-arabinose biosynthesis; UDP-4-deoxy-4-formamido-beta-L-arabinose from UDP-alpha-D-glucuronate: step 1/3. It functions in the pathway nucleotide-sugar biosynthesis; UDP-4-deoxy-4-formamido-beta-L-arabinose biosynthesis; UDP-4-deoxy-4-formamido-beta-L-arabinose from UDP-alpha-D-glucuronate: step 3/3. Its pathway is bacterial outer membrane biogenesis; lipopolysaccharide biosynthesis. Its function is as follows. Bifunctional enzyme that catalyzes the oxidative decarboxylation of UDP-glucuronic acid (UDP-GlcUA) to UDP-4-keto-arabinose (UDP-Ara4O) and the addition of a formyl group to UDP-4-amino-4-deoxy-L-arabinose (UDP-L-Ara4N) to form UDP-L-4-formamido-arabinose (UDP-L-Ara4FN). The modified arabinose is attached to lipid A and is required for resistance to polymyxin and cationic antimicrobial peptides. This is Bifunctional polymyxin resistance protein ArnA from Escherichia coli O81 (strain ED1a).